The chain runs to 544 residues: MESQRNILLIGLLFVSFLLWQQWQTDQAPQPVATQSSSVVTASSASDSHSSDVPDADSALPAAVVASKDLITVNTDQLIIKINPVGGDIVYSALVEHKLELENDEPFVLLEQTNDINYIAQSGLIGRDGIDSSVKGRAHFDSASRNYSLAAGQDTLEVPLTYVAENGATYTKMFIFHRGKFDVDVDYVIDNKTDKQLQVQMYGQIKHSIKKSESSMMMPTYRGAAFSTQDTRYEKYSFEDMADKNLDKKTLGGWAAMLQHYFVSAWVPPANDQNIIFSSISAGGQANIGFRGAIFDVAPGATQEITSQFYVGPKDQAALSAISPTLNLVVDYGFLWWLAVPIYKLLMFFQSIVGNWGAAIILITLTVRGLLYPLTKAQYTSMAKMRNLQPKLAEMKERFGDDRQKMGQAMMELYKKEKVNPMGGCLPILLQMPIFIALYWVLLESVELRHAPFMLWITDLSVQDPYYVMPILMGVSMFVMQKMQPMAPTMDPMQVKMMQWMPVVFTVFFLWFPAGLVLYWLVGNLVAIAQQKYIYAGLEKKGLK.

The next 5 membrane-spanning stretches (helical) occupy residues 6–26 (NILL…WQTD), 345–365 (LLMF…LITL), 423–443 (GGCL…WVLL), 460–480 (LSVQ…MFVM), and 503–523 (VVFT…WLVG).

It belongs to the OXA1/ALB3/YidC family. Type 1 subfamily. In terms of assembly, interacts with the Sec translocase complex via SecD. Specifically interacts with transmembrane segments of nascent integral membrane proteins during membrane integration.

It is found in the cell inner membrane. In terms of biological role, required for the insertion and/or proper folding and/or complex formation of integral membrane proteins into the membrane. Involved in integration of membrane proteins that insert both dependently and independently of the Sec translocase complex, as well as at least some lipoproteins. Aids folding of multispanning membrane proteins. This is Membrane protein insertase YidC from Shewanella woodyi (strain ATCC 51908 / MS32).